The chain runs to 236 residues: tRNA (guanine-N(7)-)-methyltransferase (236 aa).

S-adenosyl-L-methionine-binding residues include D35, E60, N87, and D113. D113 is an active-site residue. Positions 117 and 149 each coordinate substrate. Positions 217–236 (EFEQHWQEIDNPGNAPTPDA) are disordered.

Belongs to the class I-like SAM-binding methyltransferase superfamily. TrmB family.

It catalyses the reaction guanosine(46) in tRNA + S-adenosyl-L-methionine = N(7)-methylguanosine(46) in tRNA + S-adenosyl-L-homocysteine. The protein operates within tRNA modification; N(7)-methylguanine-tRNA biosynthesis. Functionally, catalyzes the formation of N(7)-methylguanine at position 46 (m7G46) in tRNA. The chain is tRNA (guanine-N(7)-)-methyltransferase from Synechococcus sp. (strain CC9902).